The chain runs to 849 residues: Formin-like protein 4 (849 aa).

The N-terminal stretch at 1 to 22 (MPPTLALLLFLALSAVAAVGGA) is a signal peptide. Residues 36–104 (IEWTPPPSTA…RARGGGGGGT (69 aa)) are disordered. A compositionally biased stretch (pro residues) spans 38–52 (WTPPPSTASPSPPSP). Low complexity predominate over residues 53-64 (DFSSDPSTPATP). A helical membrane pass occupies residues 109-129 (IVVASAAAAAVLALLAFAAAF). Basic and acidic residues predominate over residues 185–194 (ARRGMCRDVD). Residues 185-364 (ARRGMCRDVD…PEPPTGPVSA (180 aa)) are disordered. The segment covering 234-246 (GSGGGGGGEGGGT) has biased composition (gly residues). Low complexity predominate over residues 247–279 (WSEASASSPRTTTASRRSLPSLTSDFFPTTPAA). Pro residues-rich tracts occupy residues 280–297 (APVPAPAAAAPPPAPPAP), 324–339 (PSNPPPAPPPPPPPPS), and 346–360 (PKPPPPPPPPEPPTG). The 418-residue stretch at 406–823 (EAAGDEPRPK…SARSFRISAA (418 aa)) folds into the FH2 domain.

This sequence belongs to the formin-like family. Class-I subfamily.

It is found in the membrane. The protein is Formin-like protein 4 (FH4) of Oryza sativa subsp. japonica (Rice).